The sequence spans 498 residues: ATP synthase subunit beta, chloroplastic (498 aa).

Position 172–179 (172–179 (GGAGVGKT)) interacts with ATP.

It belongs to the ATPase alpha/beta chains family. In terms of assembly, F-type ATPases have 2 components, CF(1) - the catalytic core - and CF(0) - the membrane proton channel. CF(1) has five subunits: alpha(3), beta(3), gamma(1), delta(1), epsilon(1). CF(0) has four main subunits: a(1), b(1), b'(1) and c(9-12).

The protein resides in the plastid. The protein localises to the chloroplast thylakoid membrane. The catalysed reaction is ATP + H2O + 4 H(+)(in) = ADP + phosphate + 5 H(+)(out). Functionally, produces ATP from ADP in the presence of a proton gradient across the membrane. The catalytic sites are hosted primarily by the beta subunits. The chain is ATP synthase subunit beta, chloroplastic from Castanea sativa (Sweet chestnut).